Reading from the N-terminus, the 307-residue chain is Ribonuclease Z (307 aa).

Zn(2+) is bound by residues His63, His65, Asp67, His68, His141, Asp208, and His266. The active-site Proton acceptor is the Asp67.

This sequence belongs to the RNase Z family. Homodimer. Zn(2+) is required as a cofactor.

The catalysed reaction is Endonucleolytic cleavage of RNA, removing extra 3' nucleotides from tRNA precursor, generating 3' termini of tRNAs. A 3'-hydroxy group is left at the tRNA terminus and a 5'-phosphoryl group is left at the trailer molecule.. Zinc phosphodiesterase, which displays some tRNA 3'-processing endonuclease activity. Probably involved in tRNA maturation, by removing a 3'-trailer from precursor tRNA. This chain is Ribonuclease Z, found in Chlamydia pneumoniae (Chlamydophila pneumoniae).